We begin with the raw amino-acid sequence, 478 residues long: Glutamate--tRNA ligase (478 aa).

The short motif at Pro-9–Thr-19 is the 'HIGH' region element. The short motif at Lys-248 to Arg-252 is the 'KMSKS' region element. Position 251 (Lys-251) interacts with ATP.

This sequence belongs to the class-I aminoacyl-tRNA synthetase family. Glutamate--tRNA ligase type 1 subfamily. In terms of assembly, monomer.

The protein localises to the cytoplasm. It catalyses the reaction tRNA(Glu) + L-glutamate + ATP = L-glutamyl-tRNA(Glu) + AMP + diphosphate. Functionally, catalyzes the attachment of glutamate to tRNA(Glu) in a two-step reaction: glutamate is first activated by ATP to form Glu-AMP and then transferred to the acceptor end of tRNA(Glu). This chain is Glutamate--tRNA ligase, found in Prochlorococcus marinus (strain MIT 9515).